Reading from the N-terminus, the 417-residue chain is Serine hydroxymethyltransferase (417 aa).

(6S)-5,6,7,8-tetrahydrofolate is bound by residues leucine 120 and 124-126; that span reads GHL. Lysine 229 is subject to N6-(pyridoxal phosphate)lysine.

It belongs to the SHMT family. Homodimer. Pyridoxal 5'-phosphate is required as a cofactor.

It localises to the cytoplasm. The enzyme catalyses (6R)-5,10-methylene-5,6,7,8-tetrahydrofolate + glycine + H2O = (6S)-5,6,7,8-tetrahydrofolate + L-serine. The protein operates within one-carbon metabolism; tetrahydrofolate interconversion. Its pathway is amino-acid biosynthesis; glycine biosynthesis; glycine from L-serine: step 1/1. Catalyzes the reversible interconversion of serine and glycine with tetrahydrofolate (THF) serving as the one-carbon carrier. This reaction serves as the major source of one-carbon groups required for the biosynthesis of purines, thymidylate, methionine, and other important biomolecules. Also exhibits THF-independent aldolase activity toward beta-hydroxyamino acids, producing glycine and aldehydes, via a retro-aldol mechanism. The chain is Serine hydroxymethyltransferase from Anaeromyxobacter sp. (strain Fw109-5).